Reading from the N-terminus, the 117-residue chain is NADH-ubiquinone oxidoreductase chain 3 (117 aa).

Helical transmembrane passes span methionine 1 to leucine 21, phenylalanine 58 to isoleucine 78, and leucine 86 to histidine 106.

The protein belongs to the complex I subunit 3 family.

The protein resides in the mitochondrion membrane. The enzyme catalyses a ubiquinone + NADH + 5 H(+)(in) = a ubiquinol + NAD(+) + 4 H(+)(out). In terms of biological role, core subunit of the mitochondrial membrane respiratory chain NADH dehydrogenase (Complex I) that is believed to belong to the minimal assembly required for catalysis. Complex I functions in the transfer of electrons from NADH to the respiratory chain. The immediate electron acceptor for the enzyme is believed to be ubiquinone. The sequence is that of NADH-ubiquinone oxidoreductase chain 3 (mt:ND3) from Anopheles gambiae (African malaria mosquito).